A 710-amino-acid polypeptide reads, in one-letter code: MKVLLRLPALLASLTLLQMAASTRNATRTATIRETVDEVKVQVNKAFLDSRDRLKTDMSNLAPTVRHLSGYLKQAKGRTRTAIRVGQVWEQSLKRLRRMVPLTNVTGQGLDLTSLSWEVGCGHPAPTVTCNISNPYRTITGDCNNRKNPELGSANRALARWLPAEYEDGLSLPFGWTPGKTRNGFPLPQPRDVSNQVLDYLNEEEILDQNRSLLFMQWGQIVDHDLDFAPETEMGSDNYSKAQCDELCIQGDNCFPIMFPKGDPKLKTQGKCLPFFRAGFVCPTSPYQSLAREQINALTSFMDASMVYGSEPSLANRLRNLSSPLGLMAVNEEVSDHGRPLLPFVNVKPSPCEVINRTAGVPCFLAGDSRASEQILLATSHTLFLREHNRLARELSRLNPQWDGEKLYQEARRIMGALIQIITFRDYLPILLGDELQKWIPPYQGYKETVDPRISNVFTFAFRFGHLEVPSTVSRLDENYQPWGSEPELPLHKLFFNTWRVVKDGGIDPLVRGLLAKKAKLAHQDKMMTGELRNMLFQPNHTVHGFDLAAINIQRCRDHGQPGYNSWRAFCGLSQPKTLEELSAVLRNEVLAKKLMDLYGTPDNIDIWLGAIAEPLVRRGRVGPLLTCLLGQQFQRIRDGDRFWWENPGVFTEKQRDSLQKMSFSRLVCDNTGINKVPLNPFQPNSYPHSFVDCSAIEKLDLTPWASVKK.

A signal peptide spans 1–22; the sequence is MKVLLRLPALLASLTLLQMAAS. The propeptide occupies 23 to 98; it reads TRNATRTATI…WEQSLKRLRR (76 aa). N-linked (GlcNAc...) asparagine glycosylation is found at asparagine 25, asparagine 104, and asparagine 131. Cysteines 130 and 143 form a disulfide. Residue aspartate 223 participates in heme b binding. Catalysis depends on histidine 224, which acts as the Proton acceptor. Aspartate 225 provides a ligand contact to Ca(2+). Asparagine 238 is a glycosylation site (N-linked (GlcNAc...) asparagine). Intrachain disulfides connect cysteine 244/cysteine 254 and cysteine 248/cysteine 272. Residues threonine 299, phenylalanine 301, aspartate 303, and serine 305 each coordinate Ca(2+). Residue serine 313 is modified to Phosphoserine. Asparagine 320 is a glycosylation site (N-linked (GlcNAc...) asparagine). Cysteine 352 and cysteine 363 are oxidised to a cystine. 2 residues coordinate heme b: glutamate 373 and histidine 466. Position 480 is a 3'-nitrotyrosine (tyrosine 480). 2 disulfide bridges follow: cysteine 571–cysteine 628 and cysteine 669–cysteine 694.

The protein belongs to the peroxidase family. XPO subfamily. Ca(2+) serves as cofactor. It depends on heme b as a cofactor. Expressed in the lacrimal gland with higher levels and 3-fold higher activity in adult females than males and secreted into tears (at protein level).

It localises to the secreted. The protein resides in the cytoplasm. It catalyses the reaction 2 a phenolic donor + H2O2 = 2 a phenolic radical donor + 2 H2O. It carries out the reaction thiocyanate + H2O2 + H(+) = hypothiocyanous acid + H2O. The enzyme catalyses iodide + H2O2 = hypoiodite + H2O. Its function is as follows. Heme-containing oxidoreductase which catalyzes the conversion of thiocyanate (SCN(-)) into antimicrobial agent hypothiocyanous acid (OSCN(-)) in the presence of hydrogen peroxide (H2O2). Also involved in the conversion of iodide (I(-)) into hypoiodite (IO(-)) in the presence of H2O2. Responsible for the inactivation of a wide range of micro-organisms and hence, important component of defense mechanism. May be implicated in airway host defense against infection. May contribute to maintaining an appropriate H2O2 cellular level, therefore protecting cells from H2O2-caused injuries and inflammation. The protein is Lactoperoxidase (LPO) of Mesocricetus auratus (Golden hamster).